The primary structure comprises 553 residues: Dihydroxy-acid dehydratase (553 aa).

Asp78 lines the Mg(2+) pocket. Residue Cys119 participates in [2Fe-2S] cluster binding. 2 residues coordinate Mg(2+): Asp120 and Lys121. Lys121 bears the N6-carboxylysine mark. Cys193 is a [2Fe-2S] cluster binding site. Glu441 provides a ligand contact to Mg(2+). Ser467 acts as the Proton acceptor in catalysis.

Belongs to the IlvD/Edd family. As to quaternary structure, homodimer. [2Fe-2S] cluster is required as a cofactor. Mg(2+) serves as cofactor.

It catalyses the reaction (2R)-2,3-dihydroxy-3-methylbutanoate = 3-methyl-2-oxobutanoate + H2O. The catalysed reaction is (2R,3R)-2,3-dihydroxy-3-methylpentanoate = (S)-3-methyl-2-oxopentanoate + H2O. It participates in amino-acid biosynthesis; L-isoleucine biosynthesis; L-isoleucine from 2-oxobutanoate: step 3/4. The protein operates within amino-acid biosynthesis; L-valine biosynthesis; L-valine from pyruvate: step 3/4. Functionally, functions in the biosynthesis of branched-chain amino acids. Catalyzes the dehydration of (2R,3R)-2,3-dihydroxy-3-methylpentanoate (2,3-dihydroxy-3-methylvalerate) into 2-oxo-3-methylpentanoate (2-oxo-3-methylvalerate) and of (2R)-2,3-dihydroxy-3-methylbutanoate (2,3-dihydroxyisovalerate) into 2-oxo-3-methylbutanoate (2-oxoisovalerate), the penultimate precursor to L-isoleucine and L-valine, respectively. This is Dihydroxy-acid dehydratase from Geobacter metallireducens (strain ATCC 53774 / DSM 7210 / GS-15).